The sequence spans 433 residues: B3 domain-containing protein Os04g0676600 (433 aa).

2 disordered regions span residues 1–29 and 216–283; these read MADT…GGGQ and FPPV…NSAN. The segment covering 13-24 has biased composition (basic and acidic residues); it reads GDDRGREGHDDF. Positions 216-229 are enriched in low complexity; the sequence is FPPVSSSSRSFSSA. Residues 237–265 show a composition bias toward basic and acidic residues; the sequence is DAKKAKKSDIKDQPIVLRRSDTESEKNDE. Residues 269-283 are compositionally biased toward polar residues; the sequence is TPASEPSSMSHNSAN. Positions 297–399 form a DNA-binding region, TF-B3; that stretch reads LRKELTNSDV…KLVVRGEKAI (103 aa).

Its subcellular location is the nucleus. In terms of biological role, probable transcription regulator that binds specifically to the DNA sequence 5'-CATGC-3' of the IDE1 element found in the promoter of the barley iron deficiency-inducible gene IDS2. This Oryza sativa subsp. japonica (Rice) protein is B3 domain-containing protein Os04g0676600.